The following is a 213-amino-acid chain: Eukaryotic translation initiation factor isoform 4E (213 aa).

The segment at 1-37 is disordered; it reads MATEVAAAVPPPQLDAEENSGLEAAAAEAKIQPSSGP. Residues 56-61, Lys-88, and 106-107 each bind mRNA; these read QGAAWG and WE. An intrachain disulfide couples Cys-111 to Cys-150. Residues 157 to 162 and 202 to 205 each bind mRNA; these read RQRQDK and KRER.

The protein belongs to the eukaryotic initiation factor 4E family. As to quaternary structure, EIF4F is a multi-subunit complex, the composition of which varies with external and internal environmental conditions. It is composed of at least EIF4A, EIF4E and EIF4G. EIF4E is also known to interact with other partners. In higher plants two isoforms of EIF4F have been identified, named isoform EIF4F and isoform EIF(iso)4F. Isoform EIF4F has subunits p220 and p26, whereas isoform EIF(iso)4F has subunits p82 and p28. (Microbial infection) Interacts with potyvirus viral genome-linked protein (VPg) of plum pox virus (PPV) strain D both in nucleus and cytoplasm; this interaction is possible in susceptible hosts but is impaired in resistant plants. According to the redox status, the Cys-111-Cys-150 disulfide bridge may have a role in regulating protein function by affecting its ability to bind capped mRNA. In terms of tissue distribution, mostly expressed in leaves, flower buds, leaf buds and anthers, to a lower extent in roots, stems and green immature fruit, and, at low levels, in petals.

It localises to the cytoplasm. The protein localises to the nucleus. Component of the protein complex eIF4F, which is involved in the recognition of the mRNA cap, ATP-dependent unwinding of 5'-terminal secondary structure and recruitment of mRNA to the ribosome. Recognizes and binds the 7-methylguanosine-containing mRNA cap during an early step in the initiation of protein synthesis and facilitates ribosome binding by inducing the unwinding of the mRNAs secondary structures. Key component of recessive resistance to potyviruses such as the plum pox virus (PPV) strain D. In terms of biological role, (Microbial infection) Susceptibility host factor required for viral infection by recruiting viral RNAs to the host ribosomal complex via an interaction with viral genome-linked protein (VPg). The polypeptide is Eukaryotic translation initiation factor isoform 4E (Prunus domestica (Garden plum)).